The sequence spans 188 residues: GTP cyclohydrolase 1 (188 aa).

Zn(2+) is bound by residues Cys-78, His-81, and Cys-150.

Belongs to the GTP cyclohydrolase I family. Toroid-shaped homodecamer, composed of two pentamers of five dimers.

It catalyses the reaction GTP + H2O = 7,8-dihydroneopterin 3'-triphosphate + formate + H(+). It functions in the pathway cofactor biosynthesis; 7,8-dihydroneopterin triphosphate biosynthesis; 7,8-dihydroneopterin triphosphate from GTP: step 1/1. This Geobacillus kaustophilus (strain HTA426) protein is GTP cyclohydrolase 1.